A 522-amino-acid polypeptide reads, in one-letter code: Glucans biosynthesis protein G (522 aa).

The signal sequence occupies residues 1-33 (MLDNKFGFKQRVASLRWLSAAIMLSVSAVPAWA).

Belongs to the OpgD/OpgG family.

It localises to the periplasm. Its pathway is glycan metabolism; osmoregulated periplasmic glucan (OPG) biosynthesis. Its function is as follows. Involved in the biosynthesis of osmoregulated periplasmic glucans (OPGs). The polypeptide is Glucans biosynthesis protein G (Pectobacterium carotovorum subsp. carotovorum (strain PC1)).